Reading from the N-terminus, the 538-residue chain is (R)-citramalate synthase (538 aa).

The Pyruvate carboxyltransferase domain occupies 3 to 268 (IKVYDTTLRD…IPKENLKKLF (266 aa)).

Belongs to the alpha-IPM synthase/homocitrate synthase family.

The enzyme catalyses pyruvate + acetyl-CoA + H2O = (3R)-citramalate + CoA + H(+). It functions in the pathway amino-acid biosynthesis; L-isoleucine biosynthesis; 2-oxobutanoate from pyruvate: step 1/3. Functionally, catalyzes the condensation of pyruvate and acetyl-coenzyme A to form (R)-citramalate. In Thermotoga maritima (strain ATCC 43589 / DSM 3109 / JCM 10099 / NBRC 100826 / MSB8), this protein is (R)-citramalate synthase.